The chain runs to 345 residues: Phosphoribosylformylglycinamidine cyclo-ligase (345 aa).

This sequence belongs to the AIR synthase family.

It is found in the cytoplasm. It catalyses the reaction 2-formamido-N(1)-(5-O-phospho-beta-D-ribosyl)acetamidine + ATP = 5-amino-1-(5-phospho-beta-D-ribosyl)imidazole + ADP + phosphate + H(+). The protein operates within purine metabolism; IMP biosynthesis via de novo pathway; 5-amino-1-(5-phospho-D-ribosyl)imidazole from N(2)-formyl-N(1)-(5-phospho-D-ribosyl)glycinamide: step 2/2. The chain is Phosphoribosylformylglycinamidine cyclo-ligase from Mannheimia succiniciproducens (strain KCTC 0769BP / MBEL55E).